The primary structure comprises 423 residues: Tubulin beta-2 chain (423 aa).

Glutamate 44, serine 113, glycine 117, threonine 118, glycine 119, asparagine 179, and asparagine 201 together coordinate GTP. Residue glutamate 44 participates in Mg(2+) binding. A disordered region spans residues 394-423 (VSEYQQYQDATAEEEGEYDEDEDDEGGDYA). A compositionally biased stretch (acidic residues) spans 404-423 (TAEEEGEYDEDEDDEGGDYA).

This sequence belongs to the tubulin family. Dimer of alpha and beta chains. A typical microtubule is a hollow water-filled tube with an outer diameter of 25 nm and an inner diameter of 15 nM. Alpha-beta heterodimers associate head-to-tail to form protofilaments running lengthwise along the microtubule wall with the beta-tubulin subunit facing the microtubule plus end conferring a structural polarity. Microtubules usually have 13 protofilaments but different protofilament numbers can be found in some organisms and specialized cells. The cofactor is Mg(2+).

It localises to the cytoplasm. Its subcellular location is the cytoskeleton. Its function is as follows. Tubulin is the major constituent of microtubules, a cylinder consisting of laterally associated linear protofilaments composed of alpha- and beta-tubulin heterodimers. Microtubules grow by the addition of GTP-tubulin dimers to the microtubule end, where a stabilizing cap forms. Below the cap, tubulin dimers are in GDP-bound state, owing to GTPase activity of alpha-tubulin. The chain is Tubulin beta-2 chain (TUBB2) from Oomycete-like sp. (strain MacKay2000).